A 447-amino-acid polypeptide reads, in one-letter code: Succinate--CoA ligase [ADP-forming] subunit beta, mitochondrial (447 aa).

A mitochondrion-targeting transit peptide spans 1–34; sequence MFKLGRNRALASAFAATSRAPLASRLPSVSQQQR. In terms of domain architecture, ATP-grasp spans 45-287; it reads ADLLRQYGIG…TTQEDPDEVR (243 aa). Residues Lys-82, 89–91, and Glu-150 each bind ATP; that span reads GRG. Residues Asn-242 and Asp-256 each coordinate Mg(2+). Substrate is bound by residues Asn-307 and 364-366; that span reads GIV.

This sequence belongs to the succinate/malate CoA ligase beta subunit family. In terms of assembly, heterodimer of an alpha and a beta subunit. Mg(2+) is required as a cofactor.

Its subcellular location is the mitochondrion. The enzyme catalyses succinate + ATP + CoA = succinyl-CoA + ADP + phosphate. The protein operates within carbohydrate metabolism; tricarboxylic acid cycle; succinate from succinyl-CoA (ligase route): step 1/1. Succinyl-CoA synthetase functions in the citric acid cycle (TCA), coupling the hydrolysis of succinyl-CoA to the synthesis of ATP and thus represents the only step of substrate-level phosphorylation in the TCA. The beta subunit provides nucleotide specificity of the enzyme and binds the substrate succinate, while the binding sites for coenzyme A and phosphate are found in the alpha subunit. The polypeptide is Succinate--CoA ligase [ADP-forming] subunit beta, mitochondrial (Neurospora crassa (strain ATCC 24698 / 74-OR23-1A / CBS 708.71 / DSM 1257 / FGSC 987)).